We begin with the raw amino-acid sequence, 484 residues long: Pre-glycoprotein polyprotein GP complex (484 aa).

A lipid anchor (N-myristoyl glycine; by host) is attached at Gly-2. The Extracellular segment spans residues 2 to 17 (GQLVSFFQEIPNIIQE). A helical membrane pass occupies residues 18–33 (AINIALIAVSLIAILK). Topologically, residues 34–58 (GLVNLWKSGLFQLLVFLILAGRSCS) are cytoplasmic. Cys-57 is a Zn(2+) binding site. The Extracellular portion of the chain corresponds to 59 to 423 (FKIGRSTELQ…QGKTPITLVD (365 aa)). Disulfide bonds link Cys-85–Cys-225, Cys-270–Cys-283, Cys-292–Cys-301, and Cys-355–Cys-376. N-linked (GlcNAc...) asparagine; by host glycosylation is found at Asn-88, Asn-125, Asn-178, and Asn-218. N-linked (GlcNAc...) asparagine; by host glycosylation is found at Asn-356, Asn-364, Asn-381, and Asn-386. Residues 424-444 (ICFWSTLFFTTTLFLHLVGFP) traverse the membrane as a helical segment. Residues 445-484 (THRHIQGEPCPLPHKLNSNGGCRCGRYPELKKPTTWHRKH) lie on the Cytoplasmic side of the membrane. His-446, His-448, Cys-454, His-458, Cys-466, Cys-468, and His-484 together coordinate Zn(2+).

The protein belongs to the arenaviridae GPC protein family. In terms of assembly, interacts with glycoprotein G2. Part of the GP complex (GP-C) together with glycoprotein G1 and glycoprotein G2. The GP-complex interacts with protein Z, which interacts with ribonucleocapsid; these interactions may induce virion budding. As to quaternary structure, homotrimer; disulfide-linked. In pre-fusion state, G1 homotrimers bind G2 homotrimers via ionic interactions. Part of the GP complex (GP-C) together with glycoprotein G2 and the stable signal peptide. The GP-complex interacts with protein Z, which interacts with ribonucleocapsid; these interactions may induce virion budding. Homotrimer. Interacts with the stable signal peptide. In pre-fusion state, G2 homotrimers bind G1 homotrimers via ionic interactions. Part of the GP complex (GP-C) together with glycoprotein G1 and the stable signal peptide. Acidification in the endosome triggers rearrangements, which ultimately leads to a 6 helix bundle formed by the two heptad repeat domains (HR1 and HR2) in post-fusion state. The GP-complex interacts with protein Z, which interacts with ribonucleocapsid; these interactions may induce virion budding. Post-translationally, specific enzymatic cleavages in vivo yield mature proteins. GP-C polyprotein is cleaved in the endoplasmic reticulum by the host protease MBTPS1. Only cleaved glycoprotein is incorporated into virions. In terms of processing, the SSP remains stably associated with the GP complex following cleavage by signal peptidase and plays crucial roles in the trafficking of GP through the secretory pathway. Myristoylation is necessary for GP2-mediated fusion activity.

The protein resides in the virion membrane. It is found in the host endoplasmic reticulum membrane. The protein localises to the host Golgi apparatus membrane. It localises to the host cell membrane. In terms of biological role, functions as a cleaved signal peptide that is retained as the third component of the GP complex (GP-C). Helps to stabilize the spike complex in its native conformation. The SSP is required for efficient glycoprotein expression, post-translational maturation cleavage of G1 and G2, glycoprotein transport to the cell surface plasma membrane, formation of infectious virus particles, and acid pH-dependent glycoprotein-mediated cell fusion. Its function is as follows. Glycoprotein G1: Forms the virion spikes together with glycoprotein G2. The glycoprotein spike trimers are connected to the underlying matrix. Interacts with the host receptor leading to virus endocytosis. Functionally, forms the virion spikes together with glycoprotein G1. The glycoprotein spike trimers are connected to the underlying matrix. Class I viral fusion protein that directs fusion of viral and host endosomal membranes, leading to delivery of the nucleocapsid into the cytoplasm. Membrane fusion is mediated by irreversible conformational changes induced by acidification. The chain is Pre-glycoprotein polyprotein GP complex from Chapare mammarenavirus (isolate Human/Bolivia/810419/2003).